The sequence spans 335 residues: Fructose-1,6-bisphosphatase class 1 (335 aa).

4 residues coordinate Mg(2+): glutamate 92, aspartate 115, leucine 117, and aspartate 118. Residues 118–121 (DGSS), asparagine 211, tyrosine 244, 262–264 (YLY), and lysine 274 contribute to the substrate site. Position 280 (glutamate 280) interacts with Mg(2+).

Belongs to the FBPase class 1 family. In terms of assembly, homotetramer. Requires Mg(2+) as cofactor.

The protein localises to the cytoplasm. The enzyme catalyses beta-D-fructose 1,6-bisphosphate + H2O = beta-D-fructose 6-phosphate + phosphate. The protein operates within carbohydrate biosynthesis; gluconeogenesis. This is Fructose-1,6-bisphosphatase class 1 from Teredinibacter turnerae (strain ATCC 39867 / T7901).